The chain runs to 377 residues: Queuine tRNA-ribosyltransferase (377 aa).

The active-site Proton acceptor is Asp-89. Substrate contacts are provided by residues 89 to 93 (DSGGF), Asp-143, Gln-187, and Gly-214. Residues 245-251 (GVGKPED) are RNA binding. The Nucleophile role is filled by Asp-264. The segment at 269–273 (TRNAR) is RNA binding; important for wobble base 34 recognition. Zn(2+) contacts are provided by Cys-302, Cys-304, Cys-307, and His-333.

It belongs to the queuine tRNA-ribosyltransferase family. In terms of assembly, homodimer. Within each dimer, one monomer is responsible for RNA recognition and catalysis, while the other monomer binds to the replacement base PreQ1. It depends on Zn(2+) as a cofactor.

The catalysed reaction is 7-aminomethyl-7-carbaguanine + guanosine(34) in tRNA = 7-aminomethyl-7-carbaguanosine(34) in tRNA + guanine. Its pathway is tRNA modification; tRNA-queuosine biosynthesis. Its function is as follows. Catalyzes the base-exchange of a guanine (G) residue with the queuine precursor 7-aminomethyl-7-deazaguanine (PreQ1) at position 34 (anticodon wobble position) in tRNAs with GU(N) anticodons (tRNA-Asp, -Asn, -His and -Tyr). Catalysis occurs through a double-displacement mechanism. The nucleophile active site attacks the C1' of nucleotide 34 to detach the guanine base from the RNA, forming a covalent enzyme-RNA intermediate. The proton acceptor active site deprotonates the incoming PreQ1, allowing a nucleophilic attack on the C1' of the ribose to form the product. After dissociation, two additional enzymatic reactions on the tRNA convert PreQ1 to queuine (Q), resulting in the hypermodified nucleoside queuosine (7-(((4,5-cis-dihydroxy-2-cyclopenten-1-yl)amino)methyl)-7-deazaguanosine). The protein is Queuine tRNA-ribosyltransferase of Shewanella denitrificans (strain OS217 / ATCC BAA-1090 / DSM 15013).